A 445-amino-acid chain; its full sequence is 3-phosphoshikimate 1-carboxyvinyltransferase (445 aa).

3-phosphoshikimate-binding residues include lysine 28, serine 29, and arginine 33. Lysine 28 is a binding site for phosphoenolpyruvate. 2 residues coordinate phosphoenolpyruvate: glycine 102 and arginine 130. Positions 179, 180, 181, 330, and 357 each coordinate 3-phosphoshikimate. Residue glutamine 181 coordinates phosphoenolpyruvate. Catalysis depends on glutamate 330, which acts as the Proton acceptor. Phosphoenolpyruvate-binding residues include arginine 361, arginine 405, and lysine 430.

Belongs to the EPSP synthase family. Monomer.

Its subcellular location is the cytoplasm. It carries out the reaction 3-phosphoshikimate + phosphoenolpyruvate = 5-O-(1-carboxyvinyl)-3-phosphoshikimate + phosphate. It functions in the pathway metabolic intermediate biosynthesis; chorismate biosynthesis; chorismate from D-erythrose 4-phosphate and phosphoenolpyruvate: step 6/7. Catalyzes the transfer of the enolpyruvyl moiety of phosphoenolpyruvate (PEP) to the 5-hydroxyl of shikimate-3-phosphate (S3P) to produce enolpyruvyl shikimate-3-phosphate and inorganic phosphate. The polypeptide is 3-phosphoshikimate 1-carboxyvinyltransferase (Bifidobacterium longum (strain DJO10A)).